Reading from the N-terminus, the 38-residue chain is uncharacterized protein (38 aa).

A helical membrane pass occupies residues phenylalanine 10 to isoleucine 32.

It is found in the membrane. This is an uncharacterized protein from Saccharomyces cerevisiae (strain ATCC 204508 / S288c) (Baker's yeast).